The following is a 1088-amino-acid chain: RNA-directed RNA polymerase (1088 aa).

The 187-residue stretch at 501–687 folds into the RdRp catalytic domain; that stretch reads LSYGDVTRFL…AKRYIAGGKI (187 aa).

The protein belongs to the reoviridae RNA-directed RNA polymerase family. Interacts with VP3 (Potential). Interacts with VP2; this interaction activates VP1. Interacts with NSP5; this interaction is probably necessary for the formation of functional virus factories. Interacts with NSP2; this interaction is weak. Mg(2+) serves as cofactor.

It is found in the virion. The enzyme catalyses RNA(n) + a ribonucleoside 5'-triphosphate = RNA(n+1) + diphosphate. Its function is as follows. RNA-directed RNA polymerase that is involved in both transcription and genome replication. Together with VP3 capping enzyme, forms an enzyme complex positioned near the channels situated at each of the five-fold vertices of the core. Following infection, the outermost layer of the virus is lost, leaving a double-layered particle (DLP) made up of the core and VP6 shell. VP1 then catalyzes the transcription of fully conservative plus-strand genomic RNAs that are extruded through the DLP's channels into the cytoplasm where they function as mRNAs for translation of viral proteins. One copy of each of the viral (+)RNAs is also recruited during core assembly, together with newly synthesized polymerase complexes and VP2. The polymerase of these novo-formed particles catalyzes the synthesis of complementary minus-strands leading to dsRNA formation. To do so, the polymerase specifically recognizes and binds 4 bases 5'-UGUG-3' in the conserved 3'-sequence of plus-strand RNA templates. VP2 presumably activates the autoinhibited VP1-RNA complex to coordinate packaging and genome replication. Once dsRNA synthesis is complete, the polymerase switches to the transcriptional mode, thus providing secondary transcription. In Rotavirus A (strain RVA/SA11-Both/G3P5B[2]) (RV-A), this protein is RNA-directed RNA polymerase.